The primary structure comprises 328 residues: DNA-directed RNA polymerase subunit alpha (328 aa).

Residues 1–230 are alpha N-terminal domain (alpha-NTD); the sequence is MIQITGRKFK…IILDHFMFIE (230 aa). The tract at residues 257-328 is alpha C-terminal domain (alpha-CTD); sequence PEDVMSKKVE…FGLSLRKGDK (72 aa).

The protein belongs to the RNA polymerase alpha chain family. Homodimer. The RNAP catalytic core consists of 2 alpha, 1 beta, 1 beta' and 1 omega subunit. When a sigma factor is associated with the core the holoenzyme is formed, which can initiate transcription.

It catalyses the reaction RNA(n) + a ribonucleoside 5'-triphosphate = RNA(n+1) + diphosphate. Functionally, DNA-dependent RNA polymerase catalyzes the transcription of DNA into RNA using the four ribonucleoside triphosphates as substrates. The sequence is that of DNA-directed RNA polymerase subunit alpha from Fervidobacterium nodosum (strain ATCC 35602 / DSM 5306 / Rt17-B1).